The chain runs to 147 residues: Nucleoside diphosphate kinase (147 aa).

6 residues coordinate ATP: Lys9, Phe57, Arg85, Thr91, Arg102, and Asn112. Residue His115 is the Pros-phosphohistidine intermediate of the active site.

The protein belongs to the NDK family. It depends on Mg(2+) as a cofactor.

Its subcellular location is the cytoplasm. The enzyme catalyses a 2'-deoxyribonucleoside 5'-diphosphate + ATP = a 2'-deoxyribonucleoside 5'-triphosphate + ADP. The catalysed reaction is a ribonucleoside 5'-diphosphate + ATP = a ribonucleoside 5'-triphosphate + ADP. Functionally, major role in the synthesis of nucleoside triphosphates other than ATP. The ATP gamma phosphate is transferred to the NDP beta phosphate via a ping-pong mechanism, using a phosphorylated active-site intermediate. This is Nucleoside diphosphate kinase from Ignicoccus hospitalis (strain KIN4/I / DSM 18386 / JCM 14125).